Reading from the N-terminus, the 394-residue chain is Protein NDRG1 (394 aa).

The residue at position 2 (Ser-2) is an N-acetylserine. 3 positions are modified to phosphoserine: Ser-2, Ser-319, and Ser-326. Residues Arg-325–Cys-394 form a disordered region. The segment covering Arg-327 to Gly-339 has biased composition (polar residues). A Phosphothreonine modification is found at Thr-328. Ser-330 is modified (phosphoserine; by SGK1). Ser-332 and Ser-333 each carry phosphoserine. The residue at position 335 (Thr-335) is a Phosphothreonine. The residue at position 336 (Ser-336) is a Phosphoserine. 3 tandem repeats follow at residues Gly-339–Glu-348, Gly-349–Glu-358, and Gly-359–Glu-368. A 3 X 10 AA tandem repeats of G-[PST]-R-S-R-S-H-T-S-E region spans residues Gly-339–Glu-368. Thr-340 carries the post-translational modification Phosphothreonine. Residue Ser-342 is modified to Phosphoserine. Over residues His-345–Arg-371 the composition is skewed to basic and acidic residues. At Thr-346 the chain carries Phosphothreonine; by SGK1. The residue at position 352 (Ser-352) is a Phosphoserine. Thr-356 bears the Phosphothreonine; by SGK1 mark. A phosphoserine mark is found at Ser-362 and Ser-364. Thr-366 is subject to Phosphothreonine; by SGK1. Over residues Ile-374–Gly-386 the composition is skewed to polar residues. At Thr-375 the chain carries Phosphothreonine.

It belongs to the NDRG family. In terms of assembly, interacts with RAB4A (membrane-bound form); the interaction involves NDRG1 in vesicular recycling of CDH1. Interacts with APOA1, APOA2, PRA1 and RTN1. Post-translationally, under stress conditions, phosphorylated in the C-terminal on many serine and threonine residues. Phosphorylated in vitro by PKA. Phosphorylation enhanced by increased intracellular cAMP levels. Homocysteine induces dephosphorylation. Phosphorylation by SGK1 is cell cycle dependent. As to expression, widely expressed, with highest levels in kidney followed by brain, pancreas, small intestine, colon and spleen (at protein level). Also detected in heart and preputial gland, and in much smaller quantities in other tissues. Not detected in duodenum and prostate. Highly expressed in Schwann cells.

The protein resides in the cytoplasm. The protein localises to the cytosol. It is found in the cytoskeleton. Its subcellular location is the microtubule organizing center. It localises to the centrosome. The protein resides in the nucleus. The protein localises to the cell membrane. Functionally, stress-responsive protein involved in hormone responses, cell growth, and differentiation. Acts as a tumor suppressor in many cell types. Necessary but not sufficient for p53/TP53-mediated caspase activation and apoptosis. Required for vesicular recycling of CDH1 and TF. May also function in lipid trafficking. Protects cells from spindle disruption damage. Functions in p53/TP53-dependent mitotic spindle checkpoint. Regulates microtubule dynamics and maintains euploidy. Has a role in cell trafficking notably of the Schwann cell and is necessary for the maintenance and development of the peripheral nerve myelin sheath. This Mus musculus (Mouse) protein is Protein NDRG1 (Ndrg1).